The sequence spans 299 residues: ATP phosphoribosyltransferase (299 aa).

Belongs to the ATP phosphoribosyltransferase family. Long subfamily. It depends on Mg(2+) as a cofactor.

The protein localises to the cytoplasm. It catalyses the reaction 1-(5-phospho-beta-D-ribosyl)-ATP + diphosphate = 5-phospho-alpha-D-ribose 1-diphosphate + ATP. It functions in the pathway amino-acid biosynthesis; L-histidine biosynthesis; L-histidine from 5-phospho-alpha-D-ribose 1-diphosphate: step 1/9. Feedback inhibited by histidine. Functionally, catalyzes the condensation of ATP and 5-phosphoribose 1-diphosphate to form N'-(5'-phosphoribosyl)-ATP (PR-ATP). Has a crucial role in the pathway because the rate of histidine biosynthesis seems to be controlled primarily by regulation of HisG enzymatic activity. This Campylobacter jejuni subsp. jejuni serotype O:23/36 (strain 81-176) protein is ATP phosphoribosyltransferase.